A 141-amino-acid polypeptide reads, in one-letter code: ATP synthase F(0) complex subunit C2, mitochondrial (141 aa).

The N-terminal 66 residues, 1–66 (MFACSKFVST…RSFQTSAISR (66 aa)), are a transit peptide targeting the mitochondrion. Residues 82 to 102 (VGVAGSGAGIGTVFGSLIIGY) form a helical membrane-spanning segment. Lys-109 carries the N6,N6,N6-trimethyllysine modification. Residues 117–137 (ILGFALSEAMGLFCLMVAFLI) traverse the membrane as a helical segment.

This sequence belongs to the ATPase C chain family. F-type ATPases have 2 components, CF(1) - the catalytic core - and CF(0) - the membrane proton channel. CF(1) has five subunits: alpha(3), beta(3), gamma(1), delta(1), epsilon(1). CF(0) has three main subunits: a, b and c. Interacts with DNAJC30; interaction is direct. Post-translationally, trimethylated by ATPSCKMT at Lys-109. Methylation is required for proper incorporation of the C subunit into the ATP synthase complex and mitochondrial respiration.

It localises to the mitochondrion membrane. Mitochondrial membrane ATP synthase (F(1)F(0) ATP synthase or Complex V) produces ATP from ADP in the presence of a proton gradient across the membrane which is generated by electron transport complexes of the respiratory chain. F-type ATPases consist of two structural domains, F(1) - containing the extramembraneous catalytic core and F(0) - containing the membrane proton channel, linked together by a central stalk and a peripheral stalk. During catalysis, ATP synthesis in the catalytic domain of F(1) is coupled via a rotary mechanism of the central stalk subunits to proton translocation. Part of the complex F(0) domain. A homomeric c-ring of probably 10 subunits is part of the complex rotary element. The sequence is that of ATP synthase F(0) complex subunit C2, mitochondrial from Homo sapiens (Human).